Here is a 307-residue protein sequence, read N- to C-terminus: Protoheme IX farnesyltransferase (307 aa).

Helical transmembrane passes span 32–52, 65–85, 108–128, 131–151, 158–178, 186–206, 251–271, and 287–307; these read MGIV…ALHF, FFTI…NNYI, PGFA…FLLL, PMAV…YTLW, LNTV…WAAI, IAWM…LALA, LGIT…ALGL, and FVYS…VTFF.

Belongs to the UbiA prenyltransferase family. Protoheme IX farnesyltransferase subfamily. As to quaternary structure, interacts with CtaA.

Its subcellular location is the cell membrane. The enzyme catalyses heme b + (2E,6E)-farnesyl diphosphate + H2O = Fe(II)-heme o + diphosphate. Its pathway is porphyrin-containing compound metabolism; heme O biosynthesis; heme O from protoheme: step 1/1. Functionally, converts heme B (protoheme IX) to heme O by substitution of the vinyl group on carbon 2 of heme B porphyrin ring with a hydroxyethyl farnesyl side group. The chain is Protoheme IX farnesyltransferase from Bacillus mycoides (strain KBAB4) (Bacillus weihenstephanensis).